A 914-amino-acid polypeptide reads, in one-letter code: Scaffold attachment factor B1 (914 aa).

Positions 1–24 (MAETLSGLGDSGAAGAAALSSASS) are enriched in low complexity. The interval 1 to 33 (MAETLSGLGDSGAAGAAALSSASSETGTRRLSD) is disordered. Ala2 is modified (N-acetylalanine). 2 positions are modified to phosphoserine: Ser24 and Ser55. Residues 31 to 65 (LSDLRVIDLRAELRKRNVDSSGNKSVLMERLKKAI) enclose the SAP domain. The interval 64–117 (AIEDEGGNPDEIEITSEGNKKTSKRSSKGRKPEEEGVEDNGLEENSGDGQEDVE) is disordered. The segment covering 67–77 (DEGGNPDEIEI) has biased composition (acidic residues). A Phosphoserine modification is found at Ser79. The span at 98 to 117 (EGVEDNGLEENSGDGQEDVE) shows a compositional bias: acidic residues. Residues Lys172 and Lys186 each participate in a glycyl lysine isopeptide (Lys-Gly) (interchain with G-Cter in SUMO2) cross-link. Position 188 is a phosphothreonine (Thr188). Phosphoserine is present on residues Ser195, Ser197, and Ser209. A disordered region spans residues 221 to 407 (LGETCKSEPV…EKGRSSCGRN (187 aa)). A compositionally biased stretch (basic and acidic residues) spans 225–234 (CKSEPVKEES). Lys231 is covalently cross-linked (Glycyl lysine isopeptide (Lys-Gly) (interchain with G-Cter in SUMO)). Residues 275–286 (SESTAHAQSSKA) are compositionally biased toward polar residues. Basic and acidic residues predominate over residues 293 to 309 (VKREPAEQPGDGERTDC). Residue Lys294 forms a Glycyl lysine isopeptide (Lys-Gly) (interchain with G-Cter in SUMO) linkage. Residues 319–330 (EQSSAASELAEA) show a composition bias toward low complexity. The segment covering 346–359 (EARDSKEDGRKFDF) has biased composition (basic and acidic residues). Over residues 371-383 (ESSTSEGADQKMS) the composition is skewed to polar residues. Lys381 is covalently cross-linked (Glycyl lysine isopeptide (Lys-Gly) (interchain with G-Cter in SUMO2)). Ser383 and Ser384 each carry phosphoserine. Residues 390 to 401 (DTKRLSKEEKGR) show a composition bias toward basic and acidic residues. Lys392 participates in a covalent cross-link: Glycyl lysine isopeptide (Lys-Gly) (interchain with G-Cter in SUMO2). One can recognise an RRM domain in the interval 406–484 (RNFWVSGLSS…KMISVEKAKN (79 aa)). Ser415 carries the post-translational modification Phosphoserine. 2 stretches are compositionally biased toward basic and acidic residues: residues 477–551 (ISVE…ERSR) and 559–570 (GTERTVVMDKSK). Disordered regions lie at residues 477–636 (ISVE…QAQW), 670–706 (RERMHVEHERRREQERIHREREELRRQQELRYEQERR), and 748–914 (FDHR…TRRY). Residues Lys483, Lys514, Lys543, and Lys570 each participate in a glycyl lysine isopeptide (Lys-Gly) (interchain with G-Cter in SUMO2) cross-link. An interaction with POLR2A; SFRS1; SFRS9 and SFRS10 region spans residues 528 to 791 (GDDGSGEKSK…RHGGPERHGR (264 aa)). Lys578 participates in a covalent cross-link: Glycyl lysine isopeptide (Lys-Gly) (interchain with G-Cter in SUMO1); alternate. Lys578 is covalently cross-linked (Glycyl lysine isopeptide (Lys-Gly) (interchain with G-Cter in SUMO2); alternate). Phosphoserine is present on residues Ser580, Ser582, Ser601, and Ser604. Residues 581–636 (GSKERASKSLDRKSASREKRSVVSFDKVKEPRKSRDSESHRVRERSEREQRMQAQW) are compositionally biased toward basic and acidic residues. Positions 599-616 (KRSVVSFDKVKEPRKSRD) match the Nuclear localization signal motif. Residues 599-914 (KRSVVSFDKV…PSDARFTRRY (316 aa)) are interaction with SAFB2. Lys607 is subject to N6-acetyllysine. A compositionally biased stretch (basic and acidic residues) spans 748–795 (FDHRDRGRYPDHSVDRREGSRSMMGEREGQHYPERHGGPERHGRDSRD). Arg810 carries the omega-N-methylarginine modification. 2 stretches are compositionally biased toward basic and acidic residues: residues 816 to 831 (PRRDWGDHGRREDDRA) and 840 to 850 (MMDRDHKRWQG). A Glycyl lysine isopeptide (Lys-Gly) (interchain with G-Cter in SUMO2) cross-link involves residue Lys846. 3 positions are modified to asymmetric dimethylarginine: Arg867, Arg873, and Arg883. The segment covering 891-900 (GMQGGFGGQS) has biased composition (gly residues). Over residues 904 to 914 (RPSDARFTRRY) the composition is skewed to basic and acidic residues.

In terms of assembly, monomer and homodimer. Interacts with KHDRBS3. Interacts with CLK2. Interacts with POLR2A, ASF/SRSF1, SRp30c/SRFS9 and TRA2B/SFRS10. Interacts with SRPK1 and inhibits its activity. Interacts with RBMX. Interacts with FUS. Interacts with ZBED4. Sumoylated by PIAS1 with SUMO1 and SUMO2/3, desumoylated by SENP1. Sumoylation is required for transcriptional repressor activity.

Its subcellular location is the nucleus. In terms of biological role, binds to scaffold/matrix attachment region (S/MAR) DNA and forms a molecular assembly point to allow the formation of a 'transcriptosomal' complex (consisting of SR proteins and RNA polymerase II) coupling transcription and RNA processing. Functions as an estrogen receptor corepressor and can also bind to the HSP27 promoter and decrease its transcription. Thereby acts as a negative regulator of cell proliferation. When associated with RBMX, binds to and stimulates transcription from the SREBF1 promoter. The sequence is that of Scaffold attachment factor B1 (SAFB) from Pongo abelii (Sumatran orangutan).